The chain runs to 119 residues: Protein TusC (119 aa).

It belongs to the DsrF/TusC family. As to quaternary structure, heterohexamer, formed by a dimer of trimers. The hexameric TusBCD complex contains 2 copies each of TusB, TusC and TusD. The TusBCD complex interacts with TusE.

Its subcellular location is the cytoplasm. In terms of biological role, part of a sulfur-relay system required for 2-thiolation of 5-methylaminomethyl-2-thiouridine (mnm(5)s(2)U) at tRNA wobble positions. The protein is Protein TusC of Klebsiella pneumoniae (strain 342).